The chain runs to 1188 residues: DNA-directed RNA polymerase subunit beta (1188 aa).

This sequence belongs to the RNA polymerase beta chain family. As to quaternary structure, the RNAP catalytic core consists of 2 alpha, 1 beta, 1 beta' and 1 omega subunit. When a sigma factor is associated with the core the holoenzyme is formed, which can initiate transcription.

It catalyses the reaction RNA(n) + a ribonucleoside 5'-triphosphate = RNA(n+1) + diphosphate. Functionally, DNA-dependent RNA polymerase catalyzes the transcription of DNA into RNA using the four ribonucleoside triphosphates as substrates. The protein is DNA-directed RNA polymerase subunit beta of Streptococcus sanguinis (strain SK36).